A 218-amino-acid chain; its full sequence is Large ribosomal subunit protein uL3 (218 aa).

This sequence belongs to the universal ribosomal protein uL3 family. As to quaternary structure, part of the 50S ribosomal subunit. Forms a cluster with proteins L14 and L19.

Its function is as follows. One of the primary rRNA binding proteins, it binds directly near the 3'-end of the 23S rRNA, where it nucleates assembly of the 50S subunit. This chain is Large ribosomal subunit protein uL3, found in Syntrophus aciditrophicus (strain SB).